Reading from the N-terminus, the 294-residue chain is 2-oxo-3-(phosphooxy)propyl 3-oxoalkanoate synthase (294 aa).

Belongs to the AfsA family.

The enzyme catalyses a medium-chain 3-oxoacyl-[ACP] + dihydroxyacetone phosphate = a (4-alkanoyl-5-oxo-2,5-dihydrofuran-3-yl)methyl phosphate + holo-[ACP] + H2O. In terms of biological role, involved in the biosynthesis of virginiae butanolide (VB), a gamma-butyrolactone autoregulator that triggers the production of the streptogramin antibiotic virginiamycin. In Streptomyces virginiae (Streptomyces cinnamonensis), this protein is 2-oxo-3-(phosphooxy)propyl 3-oxoalkanoate synthase.